Consider the following 181-residue polypeptide: NAD(P)H-quinone oxidoreductase subunit I, chloroplastic (181 aa).

4Fe-4S ferredoxin-type domains lie at 52-81 (GRIH…VDWE) and 92-121 (KSYS…MTEE). Positions 61, 64, 67, 71, 101, 104, 107, and 111 each coordinate [4Fe-4S] cluster.

It belongs to the complex I 23 kDa subunit family. In terms of assembly, NDH is composed of at least 16 different subunits, 5 of which are encoded in the nucleus. It depends on [4Fe-4S] cluster as a cofactor.

Its subcellular location is the plastid. The protein localises to the chloroplast thylakoid membrane. It catalyses the reaction a plastoquinone + NADH + (n+1) H(+)(in) = a plastoquinol + NAD(+) + n H(+)(out). The catalysed reaction is a plastoquinone + NADPH + (n+1) H(+)(in) = a plastoquinol + NADP(+) + n H(+)(out). Its function is as follows. NDH shuttles electrons from NAD(P)H:plastoquinone, via FMN and iron-sulfur (Fe-S) centers, to quinones in the photosynthetic chain and possibly in a chloroplast respiratory chain. The immediate electron acceptor for the enzyme in this species is believed to be plastoquinone. Couples the redox reaction to proton translocation, and thus conserves the redox energy in a proton gradient. The sequence is that of NAD(P)H-quinone oxidoreductase subunit I, chloroplastic from Zygnema circumcarinatum (Green alga).